The primary structure comprises 292 residues: Phosphatidylglycerol--prolipoprotein diacylglyceryl transferase (292 aa).

The next 4 helical transmembrane spans lie at 7–27 (IILS…FLRE), 45–65 (FQLR…YVLA), 83–103 (LFWG…IFNW), and 116–136 (IWHG…MIFI). Arg165 lines the a 1,2-diacyl-sn-glycero-3-phospho-(1'-sn-glycerol) pocket. A run of 2 helical transmembrane segments spans residues 204–224 (PTFL…YFFV) and 264–284 (AAQV…AYII).

It belongs to the Lgt family.

The protein resides in the cell inner membrane. The catalysed reaction is L-cysteinyl-[prolipoprotein] + a 1,2-diacyl-sn-glycero-3-phospho-(1'-sn-glycerol) = an S-1,2-diacyl-sn-glyceryl-L-cysteinyl-[prolipoprotein] + sn-glycerol 1-phosphate + H(+). It participates in protein modification; lipoprotein biosynthesis (diacylglyceryl transfer). Catalyzes the transfer of the diacylglyceryl group from phosphatidylglycerol to the sulfhydryl group of the N-terminal cysteine of a prolipoprotein, the first step in the formation of mature lipoproteins. The sequence is that of Phosphatidylglycerol--prolipoprotein diacylglyceryl transferase from Fervidobacterium nodosum (strain ATCC 35602 / DSM 5306 / Rt17-B1).